Reading from the N-terminus, the 314-residue chain is Hydroxyethylthiazole kinase (314 aa).

The span at 1–13 (MSNSASSFADVSS) shows a compositional bias: low complexity. Residues 1 to 24 (MSNSASSFADVSSGCTAGTPVPAD) are disordered. Residue M70 coordinates substrate. 2 residues coordinate ATP: R145 and S217. G244 is a substrate binding site.

The protein belongs to the Thz kinase family. Requires Mg(2+) as cofactor.

It carries out the reaction 5-(2-hydroxyethyl)-4-methylthiazole + ATP = 4-methyl-5-(2-phosphooxyethyl)-thiazole + ADP + H(+). It functions in the pathway cofactor biosynthesis; thiamine diphosphate biosynthesis; 4-methyl-5-(2-phosphoethyl)-thiazole from 5-(2-hydroxyethyl)-4-methylthiazole: step 1/1. In terms of biological role, catalyzes the phosphorylation of the hydroxyl group of 4-methyl-5-beta-hydroxyethylthiazole (THZ). The protein is Hydroxyethylthiazole kinase of Bifidobacterium longum subsp. infantis (strain ATCC 15697 / DSM 20088 / JCM 1222 / NCTC 11817 / S12).